Reading from the N-terminus, the 316-residue chain is L-lactate dehydrogenase (316 aa).

NAD(+) contacts are provided by residues V15, D37, K42, Y68, and 82-83; that span reads GL. Substrate contacts are provided by residues Q85, R91, and 123-126; that span reads NPVD. NAD(+) is bound by residues 121–123 and T146; that span reads ASN. Residue 151-154 participates in substrate binding; it reads DTSR. The beta-D-fructose 1,6-bisphosphate site is built by R156 and H171. Residue H178 is the Proton acceptor of the active site. Y222 is subject to Phosphotyrosine. Substrate is bound at residue T231.

It belongs to the LDH/MDH superfamily. LDH family. As to quaternary structure, homotetramer.

It is found in the cytoplasm. It catalyses the reaction (S)-lactate + NAD(+) = pyruvate + NADH + H(+). Its pathway is fermentation; pyruvate fermentation to lactate; (S)-lactate from pyruvate: step 1/1. With respect to regulation, allosterically activated by fructose 1,6-bisphosphate (FBP). In terms of biological role, catalyzes the conversion of lactate to pyruvate. The chain is L-lactate dehydrogenase from Borrelia hermsii (strain HS1 / DAH).